Here is a 344-residue protein sequence, read N- to C-terminus: 4-dimethylallyltryptophan N-methyltransferase easF (344 aa).

The protein belongs to the methyltransferase superfamily. As to quaternary structure, homodimer.

The enzyme catalyses 4-(3-methylbut-2-enyl)-L-tryptophan + S-adenosyl-L-methionine = 4-(3-methylbut-2-enyl)-L-abrine + S-adenosyl-L-homocysteine + H(+). It functions in the pathway alkaloid biosynthesis; ergot alkaloid biosynthesis. 4-dimethylallyltryptophan N-methyltransferase; part of the gene cluster that mediates the biosynthesis of fungal ergot alkaloid. DmaW catalyzes the first step of ergot alkaloid biosynthesis by condensing dimethylallyl diphosphate (DMAP) and tryptophan to form 4-dimethylallyl-L-tryptophan. The second step is catalyzed by the methyltransferase easF that methylates 4-dimethylallyl-L-tryptophan in the presence of S-adenosyl-L-methionine, resulting in the formation of 4-dimethylallyl-L-abrine. The catalase easC and the FAD-dependent oxidoreductase easE then transform 4-dimethylallyl-L-abrine to chanoclavine-I which is further oxidized by easD in the presence of NAD(+), resulting in the formation of chanoclavine-I aldehyde. Agroclavine dehydrogenase easG then mediates the conversion of chanoclavine-I aldehyde to agroclavine via a non-enzymatic adduct reaction: the substrate is an iminium intermediate that is formed spontaneously from chanoclavine-I aldehyde in the presence of glutathione. The presence of easA is not required to complete this reaction. Further conversion of agroclavine to paspalic acid is a two-step process involving oxidation of agroclavine to elymoclavine and of elymoclavine to paspalic acid, the second step being performed by the elymoclavine oxidase cloA. Paspalic acid is then further converted to D-lysergic acid. Ergopeptines are assembled from D-lysergic acid and three different amino acids by the D-lysergyl-peptide-synthetases composed each of a monomudular and a trimodular nonribosomal peptide synthetase subunit. LpsB and lpsC encode the monomodular subunits responsible for D-lysergic acid activation and incorporation into the ergopeptine backbone. LpsA1 and A2 subunits encode the trimodular nonribosomal peptide synthetase assembling the tripeptide portion of ergopeptines. LpsA1 is responsible for formation of the major ergopeptine, ergotamine, and lpsA2 for alpha-ergocryptine, the minor ergopeptine of the total alkaloid mixture elaborated by C.purpurea. D-lysergyl-tripeptides are assembled by the nonribosomal peptide synthetases and released as N-(D-lysergyl-aminoacyl)-lactams. Cyclolization of the D-lysergyl-tripeptides is performed by the Fe(2+)/2-ketoglutarate-dependent dioxygenase easH which introduces a hydroxyl group into N-(D-lysergyl-aminoacyl)-lactam at alpha-C of the aminoacyl residue followed by spontaneous condensation with the terminal lactam carbonyl group. This is 4-dimethylallyltryptophan N-methyltransferase easF from Claviceps purpurea (strain 20.1) (Ergot fungus).